We begin with the raw amino-acid sequence, 370 residues long: tRNA-specific 2-thiouridylase MnmA (370 aa).

Residues 14 to 21 (GMSGGVDS) and Met40 each bind ATP. The interaction with target base in tRNA stretch occupies residues 100–102 (NPD). Residue Cys105 is the Nucleophile of the active site. Cysteines 105 and 205 form a disulfide. An ATP-binding site is contributed by Gly129. Residues 155–157 (KDQ) form an interaction with tRNA region. The active-site Cysteine persulfide intermediate is the Cys205. The interval 321–322 (RY) is interaction with tRNA.

It belongs to the MnmA/TRMU family.

It is found in the cytoplasm. The enzyme catalyses S-sulfanyl-L-cysteinyl-[protein] + uridine(34) in tRNA + AH2 + ATP = 2-thiouridine(34) in tRNA + L-cysteinyl-[protein] + A + AMP + diphosphate + H(+). Catalyzes the 2-thiolation of uridine at the wobble position (U34) of tRNA, leading to the formation of s(2)U34. The protein is tRNA-specific 2-thiouridylase MnmA of Bordetella avium (strain 197N).